The sequence spans 378 residues: Mannitol-1-phosphate 5-dehydrogenase (378 aa).

An NAD(+)-binding site is contributed by 4-15; it reads SVHFGAGNIGRG.

It belongs to the mannitol dehydrogenase family.

The enzyme catalyses D-mannitol 1-phosphate + NAD(+) = beta-D-fructose 6-phosphate + NADH + H(+). In Streptococcus pneumoniae (strain ATCC BAA-255 / R6), this protein is Mannitol-1-phosphate 5-dehydrogenase.